We begin with the raw amino-acid sequence, 343 residues long: Vancomycin C-type resistance protein VanC1 (343 aa).

One can recognise an ATP-grasp domain in the interval 134-336 (HQLADTMGIA…YEILVEQLIA (203 aa)). 164–219 (IQDHGFPIFIKPNEAGSSKGITKVTDKTALQSALTTAFAYGSTVLIQKAIAGIEIG) is a binding site for ATP. Mg(2+)-binding residues include D290, E303, and N305. Mn(2+) is bound by residues D290, E303, and N305.

Belongs to the D-alanine--D-alanine ligase family. Requires Mg(2+) as cofactor. Mn(2+) is required as a cofactor.

The protein localises to the cell membrane. It catalyses the reaction D-serine + D-alanine + ATP = D-alanyl-D-serine + ADP + phosphate + H(+). Functionally, D-alanine--D-alanine ligase of altered specificity, which catalyzes synthesis of D-Ala-D-Ser; produces a peptidoglycan which does not terminate in D-alanine but in D-serine, thus probably reducing affinity for vancomycin. Together with VanT and VanXYC, required for vancomycin resistance in E.gallinarum strain BM4174. In Enterococcus gallinarum, this protein is Vancomycin C-type resistance protein VanC1.